The sequence spans 627 residues: Plasmepsin IX (627 aa).

At 1-13 the chain is on the cytoplasmic side; the sequence is MFFINFKKIKKKQ. A helical; Signal-anchor for type II membrane protein membrane pass occupies residues 14-34; it reads FPIYLTQHRIITVFLIFIYFI. Residues 35 to 627 are Lumenal-facing; sequence NLKDCFHINN…SSLHNKINNL (593 aa). A Peptidase A1 domain is found at 228 to 605; that stretch reads YVGYIQIGTP…NNNSSYVGIA (378 aa). Catalysis depends on residues Asp-246 and Asp-495.

The protein belongs to the peptidase A1 family. Autocleaved into a p55 mature form.

Its subcellular location is the membrane. The protein localises to the cytoplasmic vesicle. The protein resides in the secretory vesicle. It localises to the rhoptry. Its activity is regulated as follows. Inhibited by small molecule 49c. Inhibited by small molecule WM382. In terms of biological role, during the asexual blood stage, initiates the proteolytic maturation of several rhoptry proteins and thus, is required for merozoite invasion of host erythrocytes and probably the subsequent development of the ring-stage. Cleaves rhoptry associated protein 1 RAP1 and apical sushi protein ASP during schizont maturation. Also cleaves rhoptry protein RON3. The chain is Plasmepsin IX from Plasmodium falciparum (isolate 3D7).